Consider the following 493-residue polypeptide: uncharacterized protein (493 aa).

The interval 96-124 (TTVAKASPPPAKPASAPTEITWKGSPQFT) is disordered.

This is an uncharacterized protein from Caulobacter vibrioides (strain ATCC 19089 / CIP 103742 / CB 15) (Caulobacter crescentus).